We begin with the raw amino-acid sequence, 463 residues long: Probable mannan endo-1,4-beta-mannosidase F (463 aa).

The first 18 residues, 1-18, serve as a signal peptide directing secretion; the sequence is MRSLSSIALLSVVGAASA. In terms of domain architecture, CBM1 spans 19-54; that stretch reads QAGPWAQCGGKSFSGSSECASGWKCQELNEWFSQCV. A disordered region spans residues 57 to 78; it reads AESTTPTVSSTPTPTDAPSVSI. Residues 59-77 show a composition bias toward low complexity; it reads STTPTVSSTPTPTDAPSVS. The segment at 75–118 is ser-rich linker; the sequence is SVSITASVTTGINKSISVSSASKSTPLPSSSSASPSPRPTGSGS. N-linked (GlcNAc...) asparagine glycosylation occurs at Asn-87. Residues 93–118 show a composition bias toward low complexity; it reads SSASKSTPLPSSSSASPSPRPTGSGS. Residues 93 to 121 form a disordered region; that stretch reads SSASKSTPLPSSSSASPSPRPTGSGSFAK. A catalytic region spans residues 119–463; it reads FAKADGLQFS…MDHMENVNKN (345 aa). Substrate contacts are provided by Trp-171 and Asn-285. Glu-286 acts as the Proton donor/acceptor in catalysis. Tyr-361 contributes to the substrate binding site. The Nucleophile role is filled by Glu-395. Trp-424 is a binding site for substrate.

The protein belongs to the glycosyl hydrolase 5 (cellulase A) family.

Its subcellular location is the secreted. It catalyses the reaction Random hydrolysis of (1-&gt;4)-beta-D-mannosidic linkages in mannans, galactomannans and glucomannans.. Functionally, endo-1,4-mannanase, a crucial enzyme for depolymerization of seed galactomannans and wood galactoglucomannans. This chain is Probable mannan endo-1,4-beta-mannosidase F (manF), found in Aspergillus oryzae (strain ATCC 42149 / RIB 40) (Yellow koji mold).